The following is a 201-amino-acid chain: Ribosomal RNA large subunit methyltransferase E (201 aa).

S-adenosyl-L-methionine contacts are provided by Gly49, Trp51, Asp69, Asp90, and Asp113. Lys153 acts as the Proton acceptor in catalysis.

This sequence belongs to the class I-like SAM-binding methyltransferase superfamily. RNA methyltransferase RlmE family.

The protein localises to the cytoplasm. It catalyses the reaction uridine(2552) in 23S rRNA + S-adenosyl-L-methionine = 2'-O-methyluridine(2552) in 23S rRNA + S-adenosyl-L-homocysteine + H(+). Specifically methylates the uridine in position 2552 of 23S rRNA at the 2'-O position of the ribose in the fully assembled 50S ribosomal subunit. The sequence is that of Ribosomal RNA large subunit methyltransferase E from Desulfotalea psychrophila (strain LSv54 / DSM 12343).